A 90-amino-acid chain; its full sequence is Acylphosphatase (90 aa).

The region spanning asparagine 3–tyrosine 90 is the Acylphosphatase-like domain. Active-site residues include arginine 18 and asparagine 36.

The protein belongs to the acylphosphatase family.

The enzyme catalyses an acyl phosphate + H2O = a carboxylate + phosphate + H(+). The protein is Acylphosphatase (acyP) of Ligilactobacillus salivarius (strain UCC118) (Lactobacillus salivarius).